The sequence spans 146 residues: Large ribosomal subunit protein uL16c (146 aa).

The protein belongs to the universal ribosomal protein uL16 family. As to quaternary structure, part of the 50S ribosomal subunit.

The protein localises to the plastid. The protein resides in the chloroplast. This chain is Large ribosomal subunit protein uL16c, found in Angiopteris evecta (Mule's foot fern).